The following is a 1196-amino-acid chain: DNA-directed RNA polymerase subunit beta (1196 aa).

Over residues 1152–1165 the composition is skewed to acidic residues; it reads EEEIEMRDLEDEED. Residues 1152 to 1196 form a disordered region; that stretch reads EEEIEMRDLEDEEDAKQADGLALSGDEAPEETASPDVERDAVTKE. The span at 1187–1196 shows a compositional bias: basic and acidic residues; it reads DVERDAVTKE.

It belongs to the RNA polymerase beta chain family. The RNAP catalytic core consists of 2 alpha, 1 beta, 1 beta' and 1 omega subunit. When a sigma factor is associated with the core the holoenzyme is formed, which can initiate transcription.

The catalysed reaction is RNA(n) + a ribonucleoside 5'-triphosphate = RNA(n+1) + diphosphate. In terms of biological role, DNA-dependent RNA polymerase catalyzes the transcription of DNA into RNA using the four ribonucleoside triphosphates as substrates. In Bacillus velezensis (strain DSM 23117 / BGSC 10A6 / LMG 26770 / FZB42) (Bacillus amyloliquefaciens subsp. plantarum), this protein is DNA-directed RNA polymerase subunit beta.